The primary structure comprises 593 residues: UvrABC system protein C (593 aa).

Residues 17 to 94 (MEPGCYLMKD…IKQYQPRYNI (78 aa)) enclose the GIY-YIG domain. In terms of domain architecture, UVR spans 199–234 (KTILKSLEERMLTASESLDFERAKEYRDLIQHIQNL).

The protein belongs to the UvrC family. As to quaternary structure, interacts with UvrB in an incision complex.

Its subcellular location is the cytoplasm. The UvrABC repair system catalyzes the recognition and processing of DNA lesions. UvrC both incises the 5' and 3' sides of the lesion. The N-terminal half is responsible for the 3' incision and the C-terminal half is responsible for the 5' incision. The protein is UvrABC system protein C of Staphylococcus aureus (strain USA300).